The sequence spans 842 residues: Glucans biosynthesis glucosyltransferase H (842 aa).

8 consecutive transmembrane segments (helical) span residues 140 to 160, 194 to 214, 513 to 533, 568 to 588, 600 to 620, 622 to 642, 656 to 676, and 680 to 700; these read ILLLLTLSQTVVATWYMKTIL, ILILFAVLFCWVSAGFWTALM, VFLTGVMSYLSAPLWFMFLAL, IALFASTMVLLFLPKLLSIIL, FIRVTLSLLLEVLFSVLLAPV, MLFHTVFVVSAFLGWEVVWNS, FMRHGSQLLLGLVWAVGMAWL, and FLFWLAPIVVSLILSPFVSAI.

It belongs to the glycosyltransferase 2 family. OpgH subfamily.

It is found in the cell inner membrane. The protein operates within glycan metabolism; osmoregulated periplasmic glucan (OPG) biosynthesis. Involved in the biosynthesis of osmoregulated periplasmic glucans (OPGs). The protein is Glucans biosynthesis glucosyltransferase H of Klebsiella pneumoniae (strain 342).